The following is a 223-amino-acid chain: Translation initiation factor 6 (223 aa).

It belongs to the eIF-6 family.

Binds to the 50S ribosomal subunit and prevents its association with the 30S ribosomal subunit to form the 70S initiation complex. This Methanobrevibacter smithii (strain ATCC 35061 / DSM 861 / OCM 144 / PS) protein is Translation initiation factor 6.